A 250-amino-acid polypeptide reads, in one-letter code: Ribonuclease HII (250 aa).

Residues 66 to 250 (QLVAGVDEVG…SFAPVSEYEK (185 aa)) enclose the RNase H type-2 domain. 3 residues coordinate a divalent metal cation: Asp72, Glu73, and Asp164.

It belongs to the RNase HII family. Mn(2+) serves as cofactor. It depends on Mg(2+) as a cofactor.

It is found in the cytoplasm. It carries out the reaction Endonucleolytic cleavage to 5'-phosphomonoester.. Its function is as follows. Endonuclease that specifically degrades the RNA of RNA-DNA hybrids. This Lactobacillus gasseri (strain ATCC 33323 / DSM 20243 / BCRC 14619 / CIP 102991 / JCM 1131 / KCTC 3163 / NCIMB 11718 / NCTC 13722 / AM63) protein is Ribonuclease HII.